Consider the following 167-residue polypeptide: Zymogen granule membrane protein 16 (167 aa).

A signal peptide spans 1-16 (MLAIALLVLLCASASA). The region spanning 24-159 (SSYSGEYGGK…IDAISLHWDT (136 aa)) is the Jacalin-type lectin domain.

It belongs to the jacalin lectin family. Expressed in pancreas, colon, duodenum, and much less in stomach.

It is found in the secreted. The protein localises to the extracellular space. It localises to the extracellular matrix. The protein resides in the zymogen granule lumen. Its subcellular location is the golgi apparatus lumen. Its function is as follows. May play a role in protein trafficking. May act as a linker molecule between the submembranous matrix on the luminal side of zymogen granule membrane (ZGM) and aggregated secretory proteins during granule formation in the TGN. This chain is Zymogen granule membrane protein 16 (Zg16), found in Rattus norvegicus (Rat).